Reading from the N-terminus, the 921-residue chain is DNA ligase (921 aa).

NAD(+) contacts are provided by residues 90-94 (DAAYD), 139-140 (SL), and Glu-173. Lys-175 serves as the catalytic N6-AMP-lysine intermediate. NAD(+)-binding residues include Arg-196, Glu-235, Lys-360, and Lys-384. Zn(2+) contacts are provided by Cys-481, Cys-484, Cys-500, and Cys-506. The tract at residues 663–688 (EAAIESAETQGGAASETTGAPTGAEA) is disordered. The BRCT domain occupies 839–921 (SLPQTLAGKT…AQLLETGSID (83 aa)).

Belongs to the NAD-dependent DNA ligase family. LigA subfamily. It depends on Mg(2+) as a cofactor. Mn(2+) serves as cofactor.

The catalysed reaction is NAD(+) + (deoxyribonucleotide)n-3'-hydroxyl + 5'-phospho-(deoxyribonucleotide)m = (deoxyribonucleotide)n+m + AMP + beta-nicotinamide D-nucleotide.. DNA ligase that catalyzes the formation of phosphodiester linkages between 5'-phosphoryl and 3'-hydroxyl groups in double-stranded DNA using NAD as a coenzyme and as the energy source for the reaction. It is essential for DNA replication and repair of damaged DNA. The sequence is that of DNA ligase from Bifidobacterium longum subsp. infantis (strain ATCC 15697 / DSM 20088 / JCM 1222 / NCTC 11817 / S12).